The primary structure comprises 355 residues: Small ribosomal subunit biogenesis GTPase RsgA 1 (355 aa).

The region spanning 103–262 is the CP-type G domain; it reads GRVADRQAIA…LIDTPGVREF (160 aa). GTP is bound by residues 152–155 and 204–212; these read NKAD and GSSGVGKSS. Residues C285, C290, H292, and C298 each contribute to the Zn(2+) site.

It belongs to the TRAFAC class YlqF/YawG GTPase family. RsgA subfamily. As to quaternary structure, monomer. Associates with 30S ribosomal subunit, binds 16S rRNA. Zn(2+) serves as cofactor.

It localises to the cytoplasm. One of several proteins that assist in the late maturation steps of the functional core of the 30S ribosomal subunit. Helps release RbfA from mature subunits. May play a role in the assembly of ribosomal proteins into the subunit. Circularly permuted GTPase that catalyzes slow GTP hydrolysis, GTPase activity is stimulated by the 30S ribosomal subunit. This is Small ribosomal subunit biogenesis GTPase RsgA 1 from Bacteroides thetaiotaomicron (strain ATCC 29148 / DSM 2079 / JCM 5827 / CCUG 10774 / NCTC 10582 / VPI-5482 / E50).